Reading from the N-terminus, the 235-residue chain is Uridylate kinase (235 aa).

10-13 (KLSG) provides a ligand contact to ATP. Position 52 (glycine 52) interacts with UMP. ATP-binding residues include glycine 53 and arginine 57. UMP is bound by residues aspartate 72 and 133–140 (TSNPYFST). 3 residues coordinate ATP: threonine 160, tyrosine 166, and aspartate 169.

Belongs to the UMP kinase family. As to quaternary structure, homohexamer.

It is found in the cytoplasm. The enzyme catalyses UMP + ATP = UDP + ADP. The protein operates within pyrimidine metabolism; CTP biosynthesis via de novo pathway; UDP from UMP (UMPK route): step 1/1. Its activity is regulated as follows. Inhibited by UTP. In terms of biological role, catalyzes the reversible phosphorylation of UMP to UDP. This Solibacter usitatus (strain Ellin6076) protein is Uridylate kinase.